The chain runs to 249 residues: Adenylate kinase (249 aa).

43 to 48 (GAGKGT) contacts ATP. The interval 63-92 (ATGDMLRAQVAAKSALGVEAKKIMDQGGLV) is NMP. Residues T64, R69, 90–92 (GLV), 119–122 (GFPR), and Q126 contribute to the AMP site. Positions 160-197 (GRLVHPASGRSYHKLFNPPKKDMIDDVSGDALVQRSDD) are LID. ATP contacts are provided by residues R161 and 170-171 (SY). Positions 194 and 205 each coordinate AMP. Q233 is a binding site for ATP.

It belongs to the adenylate kinase family. AK2 subfamily. In terms of assembly, monomer.

The protein resides in the cytoplasm. It localises to the cytosol. Its subcellular location is the mitochondrion intermembrane space. It catalyses the reaction AMP + ATP = 2 ADP. Catalyzes the reversible transfer of the terminal phosphate group between ATP and AMP. Plays an important role in cellular energy homeostasis and in adenine nucleotide metabolism. Adenylate kinase activity is critical for regulation of the phosphate utilization and the AMP de novo biosynthesis pathways. The polypeptide is Adenylate kinase (Debaryomyces hansenii (strain ATCC 36239 / CBS 767 / BCRC 21394 / JCM 1990 / NBRC 0083 / IGC 2968) (Yeast)).